Consider the following 314-residue polypeptide: Carbamate kinase (314 aa).

Belongs to the carbamate kinase family. Homodimer.

The catalysed reaction is hydrogencarbonate + NH4(+) + ATP = carbamoyl phosphate + ADP + H2O + H(+). The protein operates within metabolic intermediate metabolism; carbamoyl phosphate degradation; CO(2) and NH(3) from carbamoyl phosphate: step 1/1. This chain is Carbamate kinase (CBK), found in Trichomonas vaginalis.